The chain runs to 402 residues: Multidrug resistance protein MdtH (402 aa).

Topologically, residues 1–12 are cytoplasmic; the sequence is MSRVSQARNLGK. A helical transmembrane segment spans residues 13 to 33; that stretch reads YFLLIDNMLVVLGFFVVFPLI. Topologically, residues 34–98 are periplasmic; the sequence is SIRFVDQMGW…GFATMGIAHE (65 aa). A helical membrane pass occupies residues 99–116; the sequence is PWLLWFSCLLSGLGGTLF. Over 117–138 the chain is Cytoplasmic; that stretch reads DPPRSALVVKLIRPQQRGRFFS. A helical transmembrane segment spans residues 139–159; it reads LLMMQDSAGAVIGALLGSWLL. Residues 160-164 are Periplasmic-facing; sequence QYDFR. Residues 165-185 traverse the membrane as a helical segment; that stretch reads LVCATGAVLFVLCAAFNAWLL. Over 186–213 the chain is Cytoplasmic; that stretch reads PAWKLSTVRTPVREGMTRVMRDKRFVTY. Residues 214-234 traverse the membrane as a helical segment; that stretch reads VLTLAGYYMLAVQVMLMLPIM. Residues 235–243 are Periplasmic-facing; the sequence is VNDVAGAPS. Residues 244 to 264 traverse the membrane as a helical segment; sequence AVKWMYAIEACLSLTLLYPIA. The Cytoplasmic portion of the chain corresponds to 265-276; the sequence is RWSEKHFRLEHR. A helical transmembrane segment spans residues 277–297; that stretch reads LMAGLLIMSLSMMPVGMVSGL. The Periplasmic segment spans residues 298–299; sequence QQ. Residues 300 to 320 form a helical membrane-spanning segment; it reads LFTLICLFYIGSIIAEPARET. The Cytoplasmic portion of the chain corresponds to 321-339; sequence LSASLADARARGSYMGFSR. The chain crosses the membrane as a helical span at residues 340–360; sequence LGLAIGGAIGYIGGGWLFDLG. The Periplasmic portion of the chain corresponds to 361 to 367; the sequence is KSVHQPE. A helical membrane pass occupies residues 368–388; the sequence is LPWMMLGIIGIFTFLALGWQF. Over 389-402 the chain is Cytoplasmic; the sequence is SQKRAARRLLERDA.

It belongs to the major facilitator superfamily. DHA1 family. MdtH (TC 2.A.1.2.21) subfamily.

It localises to the cell inner membrane. In terms of biological role, confers resistance to norfloxacin and enoxacin. This is Multidrug resistance protein MdtH from Escherichia coli O157:H7.